The sequence spans 221 residues: UPF0502 protein Sputw3181_2381 (221 aa).

It belongs to the UPF0502 family.

In Shewanella sp. (strain W3-18-1), this protein is UPF0502 protein Sputw3181_2381.